Reading from the N-terminus, the 100-residue chain is Omega toxin Ap2 (100 aa).

Residues Met-1–Ala-22 form the signal peptide. Residues Asp-23–Arg-57 constitute a propeptide that is removed on maturation. Disulfide bonds link Cys-58-Cys-74, Cys-65-Cys-79, and Cys-73-Cys-94. Position 99 is a serine amide (Ser-99).

The protein belongs to the neurotoxin 14 (magi-1) family. 08 (Ltx-4) subfamily. As to expression, expressed by the venom duct.

The protein localises to the secreted. In terms of biological role, inhibits 31.17% of Cav2.1/CACNA1A current at 1 uM concentration. The polypeptide is Omega toxin Ap2 (Acanthoscurria paulensis (Brazilian giant black tarantula spider)).